The primary structure comprises 129 residues: Glycine cleavage system H protein (129 aa).

The region spanning 24–106 is the Lipoyl-binding domain; it reads AVRIGLSAYA…HGEGWLLVIQ (83 aa). An N6-lipoyllysine modification is found at Lys-65.

Belongs to the GcvH family. As to quaternary structure, the glycine cleavage system is composed of four proteins: P, T, L and H. Requires (R)-lipoate as cofactor.

In terms of biological role, the glycine cleavage system catalyzes the degradation of glycine. The H protein shuttles the methylamine group of glycine from the P protein to the T protein. This chain is Glycine cleavage system H protein, found in Synechococcus sp. (strain WH7803).